We begin with the raw amino-acid sequence, 120 residues long: Large ribosomal subunit protein bL12 (120 aa).

It belongs to the bacterial ribosomal protein bL12 family. As to quaternary structure, homodimer. Part of the ribosomal stalk of the 50S ribosomal subunit. Forms a multimeric L10(L12)X complex, where L10 forms an elongated spine to which 2 to 4 L12 dimers bind in a sequential fashion. Binds GTP-bound translation factors.

Forms part of the ribosomal stalk which helps the ribosome interact with GTP-bound translation factors. Is thus essential for accurate translation. In Alkaliphilus metalliredigens (strain QYMF), this protein is Large ribosomal subunit protein bL12.